A 179-amino-acid chain; its full sequence is Large ribosomal subunit protein uL6 (179 aa).

The protein belongs to the universal ribosomal protein uL6 family. In terms of assembly, part of the 50S ribosomal subunit.

This protein binds to the 23S rRNA, and is important in its secondary structure. It is located near the subunit interface in the base of the L7/L12 stalk, and near the tRNA binding site of the peptidyltransferase center. The polypeptide is Large ribosomal subunit protein uL6 (Bacillus velezensis (strain DSM 23117 / BGSC 10A6 / LMG 26770 / FZB42) (Bacillus amyloliquefaciens subsp. plantarum)).